The sequence spans 494 residues: DUF21 domain-containing protein At4g14240 (494 aa).

Residues 1-43 are Extracellular-facing; the sequence is MHLINAVAAARILSGIGQSNGNNGGEAIPFGSFEWITYAGISC. Residues 31-213 form the CNNM transmembrane domain; sequence GSFEWITYAG…GKGGELTHDE (183 aa). Residues 44–64 traverse the membrane as a helical segment; that stretch reads FLVLFAGIMSGLTLGLMSLGL. Residues 65 to 93 lie on the Cytoplasmic side of the membrane; the sequence is VELEILQRSGTPNEKKQAAAIFPVVQKQH. The chain crosses the membrane as a helical span at residues 94–114; it reads QLLVTLLLCNAMAMEGLPIYL. Residues 115 to 121 are Extracellular-facing; that stretch reads DKLFNEY. Residues 122 to 142 traverse the membrane as a helical segment; it reads VAIILSVTFVLAFGEVIPQAI. The Cytoplasmic segment spans residues 143-159; it reads CTRYGLAVGANFVWLVR. The chain crosses the membrane as a helical span at residues 160 to 180; sequence ILMTLCYPIAFPIGKILDLVL. At 181 to 494 the chain is on the extracellular side; the sequence is GHNDALFRRA…TITEPIRRNN (314 aa). CBS domains are found at residues 232–292, 297–352, and 364–425; these read MTPI…TETL, CIRR…SNDS, and GNHD…IVDE. N-linked (GlcNAc...) asparagine glycans are attached at residues asparagine 350 and asparagine 385. Positions 459–494 are disordered; that stretch reads QKGTGGQNKQGQTNKVPGQEQDKMLGTITEPIRRNN.

Its subcellular location is the membrane. In Arabidopsis thaliana (Mouse-ear cress), this protein is DUF21 domain-containing protein At4g14240 (CBSDUF1).